The primary structure comprises 507 residues: MVTIRADEISKIIRERIEEYNREVKIVNTGTVLQVGDGIARIHGLDEVMAGELVEFQEGTVGIALNLESTNVGVVLMGDGLLIQEGSSVKATGRIAQIPVSEAYLGRVVNALAKPIDGRGEISASEYRLIESPAPGIISRRSVYEPLQTGLIAIDSMIPIGRGQRELIIGDRQTGKTAVATDTILNQQGQNVICVYVAIGQKASSVAQVVTNFQERGAMEYTIVVAETADSPATLQYLAPYTGAALAEFFMYRKRHTLIIYDDPSKQAQAYRQMSLLLRRPPGREAYPGDVFYLHSRLLERAAKLGSLLGEGSMTALPIVETQSGDVSAYIPTNVISITDGQIFLSADLFNAGIRPAINVGISVSRVGSAAQIKAMKQVAGKLKLELAQFAELEAFAQFASDLDKATQNQLARGQRLRELLKQSQSAPLAVEEQIMTIYTGTNGYLDSLEIGQVRKFLVELRTYLKTNKPQFQEIISSTKIFTEEAEALLKEAIQEQMERFILQEQV.

170 to 177 (GDRQTGKT) contributes to the ATP binding site.

Belongs to the ATPase alpha/beta chains family. In terms of assembly, F-type ATPases have 2 components, CF(1) - the catalytic core - and CF(0) - the membrane proton channel. CF(1) has five subunits: alpha(3), beta(3), gamma(1), delta(1), epsilon(1). CF(0) has four main subunits: a, b, b' and c.

It is found in the plastid. Its subcellular location is the chloroplast thylakoid membrane. It catalyses the reaction ATP + H2O + 4 H(+)(in) = ADP + phosphate + 5 H(+)(out). Its function is as follows. Produces ATP from ADP in the presence of a proton gradient across the membrane. The alpha chain is a regulatory subunit. The chain is ATP synthase subunit alpha, chloroplastic from Daucus carota (Wild carrot).